A 497-amino-acid chain; its full sequence is Cytochrome P450 3A18 (497 aa).

C442 provides a ligand contact to heme.

Belongs to the cytochrome P450 family. Heme is required as a cofactor.

The protein resides in the endoplasmic reticulum membrane. Its subcellular location is the microsome membrane. It carries out the reaction an organic molecule + reduced [NADPH--hemoprotein reductase] + O2 = an alcohol + oxidized [NADPH--hemoprotein reductase] + H2O + H(+). In terms of biological role, catalyzes 16-beta- and 6-alpha-hydroxylations of testosterone. The sequence is that of Cytochrome P450 3A18 (Cyp3a18) from Rattus norvegicus (Rat).